We begin with the raw amino-acid sequence, 1193 residues long: Dynamin-like protein A (1193 aa).

A D1, associates with and fuses membranes, tethers lipsomes region spans residues 1-609; that stretch reads MTDQNRKELL…AFRERVKRLE (609 aa). The G1 motif D1 stretch occupies residues 50–57; that stretch reads GHYSAGKS. The interval 76-78 is G2 motif D1; it reads TSA. A G3 motif D1 region spans residues 141–144; it reads DTPG. The G4 motif D1 stretch occupies residues 199–202; sequence NQID. The interval 561–1193 is D2, does not associate with membranes; it reads MPKSEIKMEQ…WKNSDNTIKM (633 aa). The interval 619–626 is G1 motif D2; it reads GGFSSGKS. The interval 645–647 is G2 motif D2; that stretch reads TTA. The interval 774 to 777 is G3 motif D2; it reads DTPG. The interval 837–840 is G4 motif D2; the sequence is NAAD.

The protein belongs to the TRAFAC class dynamin-like GTPase superfamily. Dynamin/Fzo/YdjA family. Homodimer in solution. Both D1 and D2 domains interact with YwpG, YneK interacts only with D1 while RNase Y (rny) only interacts with whole protein. Probably oligomerizes at damaged membrane sites. The cofactor is Mg(2+).

Its subcellular location is the cell membrane. It carries out the reaction GTP + H2O = GDP + phosphate + H(+). Functionally, mediates lipid mixing of vesicles and full mixing of their contents in the absence and presence of GTP. Tethers and mixes small vesicles better than larger ones, indicating a curvature preference. GTP slows down DynA-mediated lipid fusion, perhaps controlling its activity. Prefers phospholipid composition close to the B.subtilis membrane; requires phosphatidylglycerol for fusion has no activity on pure phosphatidylethanolamine vesicles. Regulates membrane lipid diffusion. Required to prevent membrane damage when exposed to low levels of membrane-damaging antibiotics or to bacteriophage. Probably surveys the cell membrane for stress; localizes to sites of membrane damage (treatment with nisin) and forms foci in cells treated with pore-forming compounds (CCCP). May assist membrane repair, possibly by membrane tethering and fusion. Probably functions both in early and late cell division, affects the proper formation of the FtsZ ring. Plays a non-redundant role with flottilin (floT) in membrane dynamics and cell shape. Probably able to bend membranes. Tethers liposomes and mediates their fusion; this does not require GTPase activity or the presence of GTP. Both GTPase domains (dynamin-type G) are required for GTPase activity. Has intrinsic affinity for membranes and membrane distortion capability; causes tubulation and membrane distortion when expressed in a Drosophila cell line. The chain is Dynamin-like protein A from Bacillus subtilis (strain 168).